The following is a 781-amino-acid chain: MAP7 domain-containing protein 2 (781 aa).

Over residues Met-1–Gly-32 the composition is skewed to gly residues. Disordered stretches follow at residues Met-1 to Gly-37, Ala-50 to Arg-87, Leu-120 to Gln-567, and Thr-597 to Ala-628. 2 stretches are compositionally biased toward basic and acidic residues: residues Leu-71 to Arg-87 and Leu-120 to Glu-158. The stretch at Ser-73–Lys-168 forms a coiled coil. Low complexity predominate over residues Leu-192–Ala-210. Composition is skewed to polar residues over residues Glu-211 to Ile-245 and Leu-257 to Arg-267. A compositionally biased stretch (basic and acidic residues) spans Arg-318–Lys-328. Positions Arg-329–Lys-348 are enriched in polar residues. Basic and acidic residues-rich tracts occupy residues Glu-370–Gly-387, Pro-397–Ala-436, Leu-453–Gln-567, and Thr-597–Val-613.

Belongs to the MAP7 family. Interacts (via N-terminus) with microtubules; facilitates microtubule stabilization. Interacts with kinesin-1 family members, KIF5A, KIF5B and KIF5C. Expressed predominantly in the glomerular layer of the olfactory bulb and Sertoli cells of the testis.

It localises to the cytoplasm. It is found in the cytoskeleton. The protein resides in the microtubule organizing center. Its subcellular location is the centrosome. The protein localises to the midbody. It localises to the cell projection. It is found in the neuron projection. The protein resides in the axon. Functionally, microtubule-stabilizing protein involved in the control of cell motility and neurite outgrowth. Acts as a critical cofactor for kinesin transport; in the proximal axon regulates kinesin-1 family members, KIF5A, KIF5B and KIF5C recruitment to microtubules and contributes to kinesin-1-mediated transport in the axons. The chain is MAP7 domain-containing protein 2 (Map7d2) from Mus musculus (Mouse).